We begin with the raw amino-acid sequence, 773 residues long: ATP-dependent zinc metalloprotease YME1L1 (773 aa).

The Mitochondrial matrix segment spans residues 1 to 295; it reads MFSLSSTVQP…TNDSLRRTRL (295 aa). Residues 296 to 316 traverse the membrane as a helical segment; that stretch reads ILFVLLLFGIYGLLKNPFLSV. Over 317–773 the chain is Mitochondrial intermembrane; the sequence is RFRTTTGLDS…VLEGKKLEVR (457 aa). Valine 341, threonine 383, glycine 384, lysine 385, threonine 386, and leucine 387 together coordinate ATP. Histidine 599 provides a ligand contact to Zn(2+). Residue glutamate 600 is part of the active site. Residues histidine 603 and aspartate 677 each coordinate Zn(2+).

This sequence in the N-terminal section; belongs to the AAA ATPase family. In the C-terminal section; belongs to the peptidase M41 family. Homohexamer; may also form heterohexamers. Exists in several complexes of 600-1100 kDa. Interacts with AFG1L. Zn(2+) serves as cofactor. Post-translationally, proteolytically processed by mitochondrial processing peptidase (MPP) to generate the mature form. Degraded in an OMA1-dependent manner in response to oxidative stress. As to expression, high expression in cardiac and skeletal muscle mitochondria.

The protein resides in the mitochondrion inner membrane. The protein localises to the mitochondrion. It carries out the reaction ATP + H2O = ADP + phosphate + H(+). In terms of biological role, ATP-dependent metalloprotease that catalyzes the degradation of folded and unfolded proteins with a suitable degron sequence in the mitochondrial intermembrane region. Plays an important role in regulating mitochondrial morphology and function by cleaving OPA1 at position S2, giving rise to a form of OPA1 that promotes maintenance of normal mitochondrial structure and mitochondrial protein metabolism. Ensures cell proliferation, maintains normal cristae morphology and complex I respiration activity, promotes antiapoptotic activity and protects mitochondria from the accumulation of oxidatively damaged membrane proteins. Required to control the accumulation of nonassembled respiratory chain subunits (NDUFB6, OX4 and ND1). Involved in the mitochondrial adaptation in response to various signals, such as stress or developmental cues, by mediating degradation of mitochondrial proteins to rewire the mitochondrial proteome. Catalyzes degradation of mitochondrial proteins, such as translocases, lipid transfer proteins and metabolic enzymes in response to nutrient starvation in order to limit mitochondrial biogenesis: mechanistically, YME1L is activated by decreased phosphatidylethanolamine levels caused by LPIN1 activity in response to mTORC1 inhibition. Acts as a regulator of adult neural stem cell self-renewal by promoting mitochondrial proteome rewiring, preserving neural stem and progenitor cells self-renewal. Required for normal, constitutive degradation of PRELID1. Catalyzes the degradation of OMA1 in response to membrane depolarization. Mediates degradation of TIMM17A downstream of the integrated stress response (ISR). Catalyzes degradation of MICU1 when MICU1 is not assembled via an interchain disulfide. In Homo sapiens (Human), this protein is ATP-dependent zinc metalloprotease YME1L1 (YME1L1).